The sequence spans 2407 residues: Daf-12-interacting protein 1 (2407 aa).

Residues 90-112 (QNSSMASMSSTPSSGQSSSPRNA) are compositionally biased toward low complexity. The disordered stretch occupies residues 90–152 (QNSSMASMSS…PHLSVQSQQR (63 aa)). The RRM domain occupies 277–335 (CSVHVPHLDRHSPDHYRRRFESYGQVIDVDMVKSNDNKAFAVVQFTNIDDAQKALQDTN). Disordered regions lie at residues 439-632 (EVAA…LELD), 737-767 (ATDS…TNRL), 785-849 (LCIG…GRPA), 874-896 (PTHD…ETMV), 921-986 (LIAA…PSNA), 993-1012 (RSQS…TPVV), 1025-1844 (SNQP…EDSE), 1858-1918 (IAQE…VNNH), 1932-1976 (LQPA…QQSD), 2077-2103 (EENE…LAAA), and 2172-2200 (SIQR…VNQN). Residues 443 to 456 (RSSSPTSKSENDQG) are compositionally biased toward polar residues. Acidic residues predominate over residues 512-529 (EDSDEQNDVDEEDDEDVV). Basic and acidic residues-rich tracts occupy residues 530-541 (SEEKRHEPEEGK), 548-564 (GHRD…DSSE), and 573-586 (SHHE…KDSE). Over residues 587–603 (AYQSRSFSPLNYQSQSP) the composition is skewed to polar residues. Positions 618-627 (SPTTSSASSS) are enriched in low complexity. 2 stretches are compositionally biased toward polar residues: residues 791–826 (TPST…TPRS) and 837–849 (SRHN…GRPA). Residues 924-946 (ATSTGTHSVSSSAHSTPRHSISG) show a composition bias toward polar residues. Positions 966–978 (SRPEKVQIRHDTI) are enriched in basic and acidic residues. Polar residues predominate over residues 1043 to 1052 (SALQNIQNHQ). Positions 1053–1070 (PPHSNANSTPSTPSTSTH) are enriched in low complexity. The segment covering 1086 to 1153 (KEKEEREREA…KVRKKAEKEK (68 aa)) has biased composition (basic and acidic residues). Residues 1165 to 1177 (SDESDSDSNDELD) show a composition bias toward acidic residues. 6 stretches are compositionally biased toward basic and acidic residues: residues 1178–1195 (LDVR…KDHQ), 1218–1227 (RAHDSFEKMQ), 1279–1293 (ADQR…EKGE), 1304–1320 (NDAG…DREN), 1335–1355 (QGER…DAAA), and 1376–1398 (RRSS…PHED). 2 stretches are compositionally biased toward low complexity: residues 1456-1471 (PKHL…TKRS) and 1488-1498 (TTSSTSTATTS). Over residues 1534–1547 (SMNSAADSPMSTTG) the composition is skewed to polar residues. The span at 1570–1595 (SSSGQHDSSSGSSSDSSSSDGSTSSD) shows a compositional bias: low complexity. 2 stretches are compositionally biased toward basic and acidic residues: residues 1679–1691 (SEEH…HGDS) and 1703–1726 (EHQE…HEEQ). Polar residues predominate over residues 1749–1770 (TQAQEKSAHTLISDQETDQAVQ). A compositionally biased stretch (basic and acidic residues) spans 1792 to 1805 (NEKEVSGKDPHNIK). Over residues 1809–1826 (PLNNGHTDLLFSPSSSAH) the composition is skewed to polar residues. Composition is skewed to basic and acidic residues over residues 1827–1836 (ASEKQSTKSE) and 1873–1892 (EEVK…KMEE). Polar residues-rich tracts occupy residues 1895–1911 (EQTP…SQDT) and 1932–1942 (LQPASQHQVAQ). Residues 1962 to 1975 (SQQSQPSPMSSQQS) are compositionally biased toward low complexity. Residues 2049–2110 (NQMMQAKMKQ…AAATAAATMA (62 aa)) adopt a coiled-coil conformation. Residues 2077-2099 (EENERKVEEDRREKQRKEEERQR) are compositionally biased toward basic and acidic residues. Positions 2176 to 2186 (PSSTASTSSNP) are enriched in low complexity. Residues 2213–2383 (QRWFYKHFPM…TRYLLIVFTN (171 aa)) form the SPOC domain.

In terms of assembly, isoform d interacts with daf-12. In terms of tissue distribution, isoform d is widely expressed: detected in the hypodermis, seam cells, intestine, somatic gonad, neurons, vulval precursors, body wall muscle and pharynx.

Its subcellular location is the nucleus. Its function is as follows. Probable transcriptional corepressor which modulates activity of the nuclear hormone receptor daf-12 to regulate the dauer diapause. The sequence is that of Daf-12-interacting protein 1 from Caenorhabditis elegans.